A 321-amino-acid chain; its full sequence is Malate dehydrogenase (321 aa).

NAD(+) is bound by residues 11–16 and aspartate 35; that span reads GSGNIG. Residues arginine 84 and arginine 90 each coordinate substrate. NAD(+) contacts are provided by residues asparagine 97 and 120–122; that span reads ITN. The substrate site is built by asparagine 122 and arginine 153. Histidine 177 functions as the Proton acceptor in the catalytic mechanism.

It belongs to the LDH/MDH superfamily. MDH type 3 family.

It catalyses the reaction (S)-malate + NAD(+) = oxaloacetate + NADH + H(+). In terms of biological role, catalyzes the reversible oxidation of malate to oxaloacetate. This chain is Malate dehydrogenase, found in Rickettsia peacockii (strain Rustic).